The sequence spans 178 residues: CASP-like protein 5A1 (178 aa).

Residues 1-11 are compositionally biased toward low complexity; it reads MFASRPAVHPV. The segment at 1–25 is disordered; the sequence is MFASRPAVHPVEAPPPPDPAEQPRG. Residues 1–37 lie on the Cytoplasmic side of the membrane; the sequence is MFASRPAVHPVEAPPPPDPAEQPRGVLMKDLPGMPGT. The chain crosses the membrane as a helical span at residues 38 to 58; that stretch reads AGGLGLRLAQFAFAAVALAVM. The Extracellular segment spans residues 59-69; it reads ASTNDFPSVTS. Residues 70-90 traverse the membrane as a helical segment; it reads FCFLVAAAILQCLWSFSLAIV. Over 91-105 the chain is Cytoplasmic; that stretch reads DIYALLVKRCLRNRR. A helical membrane pass occupies residues 106–126; it reads AVCLFAIGDGITAALTFSAAC. The Extracellular portion of the chain corresponds to 127-152; it reads ASSGITVLIDNDLDLCSENHCASFES. The chain crosses the membrane as a helical span at residues 153–173; that stretch reads ATAMAFLSWFALSPSFLLNFW. The Cytoplasmic segment spans residues 174–178; sequence SMASG.

This sequence belongs to the Casparian strip membrane proteins (CASP) family. As to quaternary structure, homodimer and heterodimers.

The protein resides in the cell membrane. The polypeptide is CASP-like protein 5A1 (Oryza sativa subsp. japonica (Rice)).